Consider the following 138-residue polypeptide: Gas vesicle protein A (138 aa).

The tract at residues 74 to 138 is disordered; the sequence is EAGPRKDPGL…STSRKKEEQE (65 aa). A compositionally biased stretch (low complexity) spans 116 to 129; that stretch reads GSSSGSSSGSSSRS.

It belongs to the gas vesicle GvpA family. As to quaternary structure, the gas vesicle shell is 2 nm thick and consists of a single layer of this protein. It forms helical ribs nearly perpendicular to the long axis of the vesicle.

The protein resides in the gas vesicle shell. In terms of biological role, gas vesicles are hollow, gas filled proteinaceous nanostructures found in some microorganisms. During planktonic growth they allow positioning of the organism at a favorable depth for light or nutrient acquisition. GvpA forms the protein shell. It is not clear what function gas vesicles perform in soil bacteria. This Streptomyces sp. (strain CB03234) protein is Gas vesicle protein A.